Consider the following 161-residue polypeptide: MTKGPVRLDVGVSYALPRTGLPSSVSFRKWVAAALKGRIREADLAVRVVDEKEGCSLNHHYRGKDYATNVLSFPAEMPQGLPKGVKMPLLGDLVICAPVVAREAAEQGKSLSAHYAHLTVHGTLHLLGWDHEDDKEADAMEQLEREILAELGIDDPYAGER.

Zn(2+)-binding residues include His121, His125, and His131.

Belongs to the endoribonuclease YbeY family. It depends on Zn(2+) as a cofactor.

The protein resides in the cytoplasm. Functionally, single strand-specific metallo-endoribonuclease involved in late-stage 70S ribosome quality control and in maturation of the 3' terminus of the 16S rRNA. The chain is Endoribonuclease YbeY from Xanthomonas campestris pv. campestris (strain 8004).